Reading from the N-terminus, the 456-residue chain is Signal recognition particle receptor FtsY (456 aa).

Basic and acidic residues predominate over residues 1 to 26 (MFDGLKKKLNRFRNDVEETAEEKAEA). A disordered region spans residues 1–163 (MFDGLKKKLN…DEDDSSGPGR (163 aa)). Residues 27–39 (AADEAESDADAEA) show a composition bias toward acidic residues. The segment covering 40-62 (ESAPADTDNAAVEPEASEPAAAD) has biased composition (low complexity). The segment covering 63-81 (PDADAVGDADAGSEADAVD) has biased composition (acidic residues). Positions 82 to 97 (AADAPADAESSSAAVE) are enriched in low complexity. Residues 112–134 (PDSEVDAGADTGDEPSGEPTADE) show a composition bias toward acidic residues. GTP contacts are provided by residues 265–272 (GINGVGKT), 347–351 (DTAGR), and 405–408 (TKAD).

Belongs to the GTP-binding SRP family. FtsY subfamily. As to quaternary structure, part of the signal recognition particle protein translocation system, which is composed of SRP and FtsY.

Its subcellular location is the cell membrane. The protein localises to the cytoplasm. It carries out the reaction GTP + H2O = GDP + phosphate + H(+). Its function is as follows. Involved in targeting and insertion of nascent membrane proteins into the cytoplasmic membrane. Acts as a receptor for the complex formed by the signal recognition particle (SRP) and the ribosome-nascent chain (RNC). The sequence is that of Signal recognition particle receptor FtsY from Haloferax volcanii (strain ATCC 29605 / DSM 3757 / JCM 8879 / NBRC 14742 / NCIMB 2012 / VKM B-1768 / DS2) (Halobacterium volcanii).